Here is a 406-residue protein sequence, read N- to C-terminus: Arginine deiminase (406 aa).

Residue Cys-396 is the Amidino-cysteine intermediate of the active site.

This sequence belongs to the arginine deiminase family.

It is found in the cytoplasm. It catalyses the reaction L-arginine + H2O = L-citrulline + NH4(+). It participates in amino-acid degradation; L-arginine degradation via ADI pathway; carbamoyl phosphate from L-arginine: step 1/2. In Vibrio vulnificus (strain YJ016), this protein is Arginine deiminase.